The following is a 48-amino-acid chain: Large ribosomal subunit protein bL33A (48 aa).

This sequence belongs to the bacterial ribosomal protein bL33 family.

This is Large ribosomal subunit protein bL33A from Exiguobacterium sibiricum (strain DSM 17290 / CCUG 55495 / CIP 109462 / JCM 13490 / 255-15).